A 63-amino-acid polypeptide reads, in one-letter code: MVFQLICSTCGRDISEERYYLLIKELSLKKVLEGVKNNCCRLKLSTQIEPQRNLTVQPLIDIN.

This sequence belongs to the poxviridae DNA-directed RNA polymerase 7 kDa subunit family. As to quaternary structure, the DNA-dependent RNA polymerase used for intermediate and late genes expression consists of eight subunits 147 kDa, 133 kDa, 35 kDa, 30 kDa, 22 kDa, 19 kDa, 18 kDa and 7 kDa totalling more than 500 kDa in mass. The same holoenzyme, with the addition of the transcription-specificity factor RAP94, is used for early gene expression.

The protein localises to the virion. It carries out the reaction RNA(n) + a ribonucleoside 5'-triphosphate = RNA(n+1) + diphosphate. Part of the DNA-dependent RNA polymerase which catalyzes the transcription of viral DNA into RNA using the four ribonucleoside triphosphates as substrates. Responsible for the transcription of early, intermediate and late genes. DNA-dependent RNA polymerase associates with the early transcription factor (ETF) thereby allowing the early genes transcription. Late transcription, and probably also intermediate transcription, require newly synthesized RNA polymerase. This is DNA-directed RNA polymerase 7 kDa subunit (RPO7) from Homo sapiens (Human).